The primary structure comprises 149 residues: MTSFKLVKYIPRIKKKKSGLRKLARKVPTDRLLKFERVFKAQKRIHMSVFKAQRVLDEIRWRYYEETVMILNLMPYRASYPILKLVYSAAANAAHYRDFDKANLFITKAEVSRSTIMKKFRPRARGRSFPIKKSMCHITIALNIVKRSK.

This sequence belongs to the universal ribosomal protein uL22 family. As to quaternary structure, part of the 50S ribosomal subunit.

The protein localises to the plastid. The protein resides in the chloroplast. Its function is as follows. This protein binds specifically to 23S rRNA. The globular domain of the protein is located near the polypeptide exit tunnel on the outside of the subunit, while an extended beta-hairpin is found that lines the wall of the exit tunnel in the center of the 70S ribosome. This is Large ribosomal subunit protein uL22c (rpl22) from Brachypodium distachyon (Purple false brome).